We begin with the raw amino-acid sequence, 792 residues long: Alpha-1,6-mannosylglycoprotein 6-beta-N-acetylglucosaminyltransferase B (792 aa).

Over 1 to 24 the chain is Cytoplasmic; it reads MITVNPDGKIMVRRCLVTLRPFRL. The chain crosses the membrane as a helical; Signal-anchor for type II membrane protein span at residues 25-45; it reads FVLGIGFFTLCFLMTSLGGQF. Residues 46 to 792 lie on the Lumenal side of the membrane; that stretch reads SARRLGDSPF…GQVALCQGCL (747 aa). N127 carries an N-linked (GlcNAc...) asparagine glycan. Disulfide bonds link C157/C195, C168/C208, C184/C353, and C387/C644. N675 carries N-linked (GlcNAc...) asparagine glycosylation. 5 disulfides stabilise this stretch: C700–C775, C704–C777, C711–C764, C732–C753, and C788–C791.

Belongs to the glycosyltransferase 18 family. Mn(2+) serves as cofactor. In terms of tissue distribution, present in brain (at protein level). Predominantly expressed in hippocampus, superficial layers of the brain cortex, striatum, nucleus accumbens, a subset of nuclei in the thalamus, inferior colliculus, brain stem and cerebellum.

The protein localises to the golgi apparatus membrane. The enzyme catalyses N(4)-{beta-D-GlcNAc-(1-&gt;2)-[beta-D-GlcNAc-(1-&gt;4)]-alpha-D-Man-(1-&gt;3)-[beta-D-GlcNAc-(1-&gt;2)-alpha-D-Man-(1-&gt;6)]-beta-D-Man-(1-&gt;4)-beta-D-GlcNAc-(1-&gt;4)-beta-D-GlcNAc}-L-asparaginyl-[protein] + UDP-N-acetyl-alpha-D-glucosamine = N(4)-{beta-D-GlcNAc-(1-&gt;2)-[beta-D-GlcNAc-(1-&gt;4)]-alpha-D-Man-(1-&gt;3)-[beta-D-GlcNAc-(1-&gt;2)-[beta-D-GlcNAc-(1-&gt;6)]-alpha-D-Man-(1-&gt;6)]-beta-D-Man-(1-&gt;4)-beta-D-GlcNAc-(1-&gt;4)-beta-D-GlcNAc}-L-asparaginyl-[protein] + UDP + H(+). It carries out the reaction 3-O-[N-acetyl-beta-D-glucosaminyl-(1-&gt;2)-alpha-D-mannosyl]-L-seryl-[protein] + UDP-N-acetyl-alpha-D-glucosamine = O(3)-{N-acetyl-beta-D-glucosaminyl-(1-&gt;2)-[N-acetyl-beta-D-glucosaminyl-(1-&gt;6)]-alpha-D-mannosyl}-L-seryl-[protein] + UDP + H(+). The catalysed reaction is 3-O-[N-acetyl-beta-D-glucosaminyl-(1-&gt;2)-alpha-D-mannosyl]-L-threonyl-[protein] + UDP-N-acetyl-alpha-D-glucosamine = O(3)-{N-acetyl-beta-D-glucosaminyl-(1-&gt;2)-[N-acetyl-beta-D-glucosaminyl-(1-&gt;6)]-alpha-D-mannosyl}-L-threonyl-[protein] + UDP + H(+). It participates in protein modification; protein glycosylation. In terms of biological role, glycosyltransferase that acts on alpha-linked mannose of N-glycans and O-mannosyl glycans. Catalyzes the transfer of N-acetylglucosamine (GlcNAc) to the beta 1-6 linkage of the mannose residue of GlcNAc-beta1,2-Man-alpha on both the alpha1,3- and alpha1,6-linked mannose arms in the core structure of N-glycan. Also acts on the GlcNAc-beta1,2-Man-alpha1-Ser/Thr moiety, forming a 2,6-branched structure in brain O-mannosyl glycan. Plays an active role in modulating integrin and laminin-dependent adhesion and migration of neuronal cells via its activity in the O-mannosyl glycan pathway. This is Alpha-1,6-mannosylglycoprotein 6-beta-N-acetylglucosaminyltransferase B (Mgat5b) from Mus musculus (Mouse).